The primary structure comprises 390 residues: Phosphopentomutase (390 aa).

Mn(2+) is bound by residues aspartate 12, aspartate 285, histidine 290, aspartate 326, histidine 327, and histidine 338.

Belongs to the phosphopentomutase family. Mn(2+) serves as cofactor.

It is found in the cytoplasm. It catalyses the reaction 2-deoxy-alpha-D-ribose 1-phosphate = 2-deoxy-D-ribose 5-phosphate. The catalysed reaction is alpha-D-ribose 1-phosphate = D-ribose 5-phosphate. Its pathway is carbohydrate degradation; 2-deoxy-D-ribose 1-phosphate degradation; D-glyceraldehyde 3-phosphate and acetaldehyde from 2-deoxy-alpha-D-ribose 1-phosphate: step 1/2. Isomerase that catalyzes the conversion of deoxy-ribose 1-phosphate (dRib-1-P) and ribose 1-phosphate (Rib-1-P) to deoxy-ribose 5-phosphate (dRib-5-P) and ribose 5-phosphate (Rib-5-P), respectively. In Brevibacillus brevis (strain 47 / JCM 6285 / NBRC 100599), this protein is Phosphopentomutase.